A 212-amino-acid chain; its full sequence is uncharacterized protein (212 aa).

Residues 11–31 form a helical membrane-spanning segment; that stretch reads NLIFFQFIVYFFFISLTILII.

It localises to the membrane. This is an uncharacterized protein from Rickettsia prowazekii (strain Madrid E).